Reading from the N-terminus, the 501-residue chain is Type B diterpene cyclase (501 aa).

Belongs to the terpene synthase family. As to quaternary structure, monomer. Mg(2+) serves as cofactor.

It catalyses the reaction geranylgeranyl diphosphate = tuberculosinyl diphosphate. Its activity is regulated as follows. Strongly inhibited by 15-aza-dihydrogeranylgeraniol and 5-isopropyl-N,N,N,2-tetramethyl-4-(piperidine-1-carbonyloxy)benzenaminium chloride (Amo-1618). Inhibited by GGPP concentrations higher than 50 uM. In terms of biological role, catalyzes the formation of tuberculosinyl diphosphate from geranylgeranyl diphosphate (GGPP). It could also react with (14R/S)-14,15-oxidoGGPP to generate 3alpha- and 3beta-hydroxytuberculosinyl diphosphate. The polypeptide is Type B diterpene cyclase (Mycobacterium tuberculosis (strain ATCC 25618 / H37Rv)).